The following is a 374-amino-acid chain: Amino acid binding protein (374 aa).

A signal peptide spans methionine 1–alanine 27.

Belongs to the leucine-binding protein family.

It localises to the periplasm. Binds primarily proteinogenic amino acids. In Pseudomonas aeruginosa (strain ATCC 15692 / DSM 22644 / CIP 104116 / JCM 14847 / LMG 12228 / 1C / PRS 101 / PAO1), this protein is Amino acid binding protein.